The following is a 303-amino-acid chain: Oxygen-dependent coproporphyrinogen-III oxidase (303 aa).

A substrate-binding site is contributed by Ser93. Residues His97 and His107 each contribute to the a divalent metal cation site. His107 (proton donor) is an active-site residue. Residue 109–111 (NVR) participates in substrate binding. His146 and His176 together coordinate a divalent metal cation. The interval 241 to 276 (YVEFNLVYDRGTLFGLQSGGRTESILMSLPPQVRWG) is important for dimerization. 259–261 (GGR) lines the substrate pocket.

The protein belongs to the aerobic coproporphyrinogen-III oxidase family. In terms of assembly, homodimer. It depends on a divalent metal cation as a cofactor.

It is found in the cytoplasm. The catalysed reaction is coproporphyrinogen III + O2 + 2 H(+) = protoporphyrinogen IX + 2 CO2 + 2 H2O. It functions in the pathway porphyrin-containing compound metabolism; protoporphyrin-IX biosynthesis; protoporphyrinogen-IX from coproporphyrinogen-III (O2 route): step 1/1. In terms of biological role, involved in the heme biosynthesis. Catalyzes the aerobic oxidative decarboxylation of propionate groups of rings A and B of coproporphyrinogen-III to yield the vinyl groups in protoporphyrinogen-IX. The chain is Oxygen-dependent coproporphyrinogen-III oxidase from Pseudomonas putida (strain ATCC 700007 / DSM 6899 / JCM 31910 / BCRC 17059 / LMG 24140 / F1).